A 363-amino-acid polypeptide reads, in one-letter code: Eukaryotic translation initiation factor 3 subunit H (363 aa).

In terms of domain architecture, MPN spans 13-163 (VQVEALVVMK…LRAFRLSTAF (151 aa)).

It belongs to the eIF-3 subunit H family. In terms of assembly, component of the eukaryotic translation initiation factor 3 (eIF-3) complex.

The protein resides in the cytoplasm. Component of the eukaryotic translation initiation factor 3 (eIF-3) complex, which is involved in protein synthesis of a specialized repertoire of mRNAs and, together with other initiation factors, stimulates binding of mRNA and methionyl-tRNAi to the 40S ribosome. The eIF-3 complex specifically targets and initiates translation of a subset of mRNAs involved in cell proliferation. This is Eukaryotic translation initiation factor 3 subunit H from Pyricularia oryzae (strain 70-15 / ATCC MYA-4617 / FGSC 8958) (Rice blast fungus).